The chain runs to 307 residues: MLSTNNLLILLIFSFLITNVKSDLGGPCFSMSTMEGFACGLGVHKNIQIITDCLCYIPGYWEQLDGCDKLVRGPHHTPIDGAEICSRASEYAANPAGFTGETDYYESSTTVMHVVMLDFPTYSPGVTNFLDSSSNDLTTTNTDEINSSITTDEVIPSSSSSYIEIPSETLMESSVSTQPSTIETSETSHATSLEVSSIITGVSSEPLTIVSESGGLNSTEIASTPVVITSPTPQPLLETPSQESSAPNIDSTTPTTIDNTVVDGTTTNDATSVASSTSDVAYVYIGGAMGYPSISVALGLVFIAYLV.

A signal peptide spans 1 to 22 (MLSTNNLLILLIFSFLITNVKS). 2 N-linked (GlcNAc...) asparagine glycosylation sites follow: Asn-146 and Asn-217. Residues 232–261 (TPQPLLETPSQESSAPNIDSTTPTTIDNTV) form a disordered region. Polar residues predominate over residues 239-254 (TPSQESSAPNIDSTTP). Gly-286 is lipidated: GPI-anchor amidated glycine. Residues 287–307 (GAMGYPSISVALGLVFIAYLV) constitute a propeptide, removed in mature form.

It is found in the cell membrane. In Candida albicans (strain SC5314 / ATCC MYA-2876) (Yeast), this protein is Predicted GPI-anchored protein 44 (PGA44).